A 392-amino-acid polypeptide reads, in one-letter code: Chaperone protein DnaJ (392 aa).

Residues 5 to 75 enclose the J domain; sequence DYYEVLGIDK…QKKQQYDQFG (71 aa). The segment at 148-229 adopts a CR-type zinc-finger fold; the sequence is GVEKTIKYKR…CHGTGTAKET (82 aa). Zn(2+) contacts are provided by cysteine 161, cysteine 164, cysteine 177, cysteine 180, cysteine 203, cysteine 206, cysteine 217, and cysteine 220. CXXCXGXG motif repeat units follow at residues 161 to 168, 177 to 184, 203 to 210, and 217 to 224; these read CENCHGTG, CPTCNGQG, CPDCHGTG, and CKHCHGTG.

Belongs to the DnaJ family. As to quaternary structure, homodimer. It depends on Zn(2+) as a cofactor.

It localises to the cytoplasm. Participates actively in the response to hyperosmotic and heat shock by preventing the aggregation of stress-denatured proteins and by disaggregating proteins, also in an autonomous, DnaK-independent fashion. Unfolded proteins bind initially to DnaJ; upon interaction with the DnaJ-bound protein, DnaK hydrolyzes its bound ATP, resulting in the formation of a stable complex. GrpE releases ADP from DnaK; ATP binding to DnaK triggers the release of the substrate protein, thus completing the reaction cycle. Several rounds of ATP-dependent interactions between DnaJ, DnaK and GrpE are required for fully efficient folding. Also involved, together with DnaK and GrpE, in the DNA replication of plasmids through activation of initiation proteins. In Fusobacterium nucleatum subsp. nucleatum (strain ATCC 25586 / DSM 15643 / BCRC 10681 / CIP 101130 / JCM 8532 / KCTC 2640 / LMG 13131 / VPI 4355), this protein is Chaperone protein DnaJ.